A 436-amino-acid polypeptide reads, in one-letter code: AMSH-like protease (436 aa).

The residue at position 1 (Met-1) is an N-acetylmethionine. Phosphoserine is present on residues Ser-25 and Ser-242. The MPN domain occupies 269–397 (VVLSRDLCHK…IFRLTNAGML (129 aa)). Positions 347, 349, 360, 362, 402, 408, and 410 each coordinate Zn(2+). The JAMM motif signature appears at 347-360 (HTHPTQTAFLSSVD).

It belongs to the peptidase M67C family. It depends on Zn(2+) as a cofactor. Ubiquitously expressed. Isoform 1 is widely expressed while isoform 2 is testis-specific.

Zinc metalloprotease that specifically cleaves 'Lys-63'-linked polyubiquitin chains. Acts as a positive regulator of the TORC1 signaling pathway by mediating 'Lys-63'-linked deubiquitination of SESN2, thereby inhibiting SESN2-interaction with the GATOR2 complex. Does not cleave 'Lys-48'-linked polyubiquitin chains. The polypeptide is AMSH-like protease (Stambpl1) (Mus musculus (Mouse)).